A 492-amino-acid chain; its full sequence is Catalase isozyme 1 (492 aa).

Active-site residues include His-65 and Asn-138. A heme-binding site is contributed by Tyr-348.

Belongs to the catalase family. As to quaternary structure, homotetramer. The cofactor is heme.

The protein resides in the peroxisome. It catalyses the reaction 2 H2O2 = O2 + 2 H2O. Occurs in almost all aerobically respiring organisms and serves to protect cells from the toxic effects of hydrogen peroxide. The polypeptide is Catalase isozyme 1 (CAT1) (Gossypium hirsutum (Upland cotton)).